The sequence spans 426 residues: Probable serine/threonine-protein kinase PBL3 (426 aa).

Positions 1 to 42 are disordered; the sequence is MGNCLDSSAKVDSSSHSPHANSASLSSRVSSKTSRSTVPSSL. A lipid anchor (N-myristoyl glycine) is attached at Gly-2. The S-palmitoyl cysteine moiety is linked to residue Cys-4. The segment covering 7-42 has biased composition (low complexity); the sequence is SSAKVDSSSHSPHANSASLSSRVSSKTSRSTVPSSL. Residue Thr-72 is modified to Phosphothreonine. Residues 83–366 form the Protein kinase domain; that stretch reads FRPDSLLGEG…SEVLAKLDQL (284 aa). ATP contacts are provided by residues 89-97 and Lys-121; that span reads LGEGGFGYV. Phosphotyrosine is present on Tyr-166. The Proton acceptor role is filled by Asp-216. A Phosphoserine modification is found at Ser-250. 2 positions are modified to phosphothreonine: Thr-251 and Thr-256. Residue Tyr-264 is modified to Phosphotyrosine. Positions 367–394 are enriched in polar residues; that stretch reads ESTKPGTGVGNRQAQIDSPRGSNGSIVQ. The interval 367–426 is disordered; the sequence is ESTKPGTGVGNRQAQIDSPRGSNGSIVQKSPRRYSYDRPLLHITPGASPLPTHNHSPRVR.

Belongs to the protein kinase superfamily. Ser/Thr protein kinase family. In terms of assembly, interacts with the Xanthomonas campestris effector XopAC/AvrAC. Strongly expressed in leaves, moderately in flowers, and barely in roots.

Its subcellular location is the cell membrane. It is found in the nucleus. It catalyses the reaction L-seryl-[protein] + ATP = O-phospho-L-seryl-[protein] + ADP + H(+). The catalysed reaction is L-threonyl-[protein] + ATP = O-phospho-L-threonyl-[protein] + ADP + H(+). Functionally, may be involved in plant defense signaling. In Arabidopsis thaliana (Mouse-ear cress), this protein is Probable serine/threonine-protein kinase PBL3.